The chain runs to 96 residues: Small ribosomal subunit protein bS6 (96 aa).

The protein belongs to the bacterial ribosomal protein bS6 family.

In terms of biological role, binds together with bS18 to 16S ribosomal RNA. The chain is Small ribosomal subunit protein bS6 from Streptococcus equi subsp. equi (strain 4047).